The primary structure comprises 459 residues: tRNA-2-methylthio-N(6)-dimethylallyladenosine synthase (459 aa).

Residues 1–116 form the MTTase N-terminal domain; sequence MRAHLITYGC…IGKALETNER (116 aa). Residues C10, C46, C79, C148, C152, and C155 each contribute to the [4Fe-4S] cluster site. The region spanning 134–367 is the Radical SAM core domain; it reads PQGKLQAHLT…IAKQKEWSAR (234 aa). The 64-residue stretch at 370 to 433 folds into the TRAM domain; the sequence is AAKVGTIQEV…PHMLYGRLIG (64 aa).

The protein belongs to the methylthiotransferase family. MiaB subfamily. In terms of assembly, monomer. It depends on [4Fe-4S] cluster as a cofactor.

The protein resides in the cytoplasm. The catalysed reaction is N(6)-dimethylallyladenosine(37) in tRNA + (sulfur carrier)-SH + AH2 + 2 S-adenosyl-L-methionine = 2-methylsulfanyl-N(6)-dimethylallyladenosine(37) in tRNA + (sulfur carrier)-H + 5'-deoxyadenosine + L-methionine + A + S-adenosyl-L-homocysteine + 2 H(+). In terms of biological role, catalyzes the methylthiolation of N6-(dimethylallyl)adenosine (i(6)A), leading to the formation of 2-methylthio-N6-(dimethylallyl)adenosine (ms(2)i(6)A) at position 37 in tRNAs that read codons beginning with uridine. The protein is tRNA-2-methylthio-N(6)-dimethylallyladenosine synthase of Deinococcus geothermalis (strain DSM 11300 / CIP 105573 / AG-3a).